A 149-amino-acid chain; its full sequence is Transcriptional repressor NrdR (149 aa).

A zinc finger lies at 3–34 (CPFCSENDTKVIDSRLVADGHQVRRRRQCLAC). An ATP-cone domain is found at 49-139 (PKVIKSNGNR…VYRSFEDIRE (91 aa)).

Belongs to the NrdR family. Requires Zn(2+) as cofactor.

Negatively regulates transcription of bacterial ribonucleotide reductase nrd genes and operons by binding to NrdR-boxes. This Vibrio parahaemolyticus serotype O3:K6 (strain RIMD 2210633) protein is Transcriptional repressor NrdR.